Reading from the N-terminus, the 787-residue chain is Mitochondrial intermediate peptidase (787 aa).

The transit peptide at 1–36 (MQNKVLRGILFKNVPLGYSYNRSIRHPTFGNSIIRW) directs the protein to the mitochondrion. H573 contacts Zn(2+). E574 is a catalytic residue. Zn(2+)-binding residues include H577 and H580.

It belongs to the peptidase M3 family. The cofactor is Zn(2+).

The protein resides in the mitochondrion matrix. The enzyme catalyses Release of an N-terminal octapeptide as second stage of processing of some proteins imported into the mitochondrion.. Functionally, cleaves proteins, imported into the mitochondrion, to their mature size. While most mitochondrial precursor proteins are processed to the mature form in one step by mitochondrial processing peptidase (MPP), the sequential cleavage by MIP of an octapeptide after initial processing by MPP is a required step for a subgroup of nuclear-encoded precursor proteins destined for the matrix or the inner membrane. The protein is Mitochondrial intermediate peptidase (OCT1) of Vanderwaltozyma polyspora (strain ATCC 22028 / DSM 70294 / BCRC 21397 / CBS 2163 / NBRC 10782 / NRRL Y-8283 / UCD 57-17) (Kluyveromyces polysporus).